We begin with the raw amino-acid sequence, 342 residues long: Glycerol-1-phosphate dehydrogenase [NAD(P)+] (342 aa).

Residues 84–88 (GRPID) and 106–109 (TAAS) contribute to the NAD(+) site. Substrate is bound at residue Asp111. Ser115 serves as a coordination point for NAD(+). Asp160 lines the substrate pocket. Positions 160 and 241 each coordinate Zn(2+). His245 provides a ligand contact to substrate. Residue His260 participates in Zn(2+) binding.

Belongs to the glycerol-1-phosphate dehydrogenase family. As to quaternary structure, homodimer. Zn(2+) serves as cofactor.

The protein resides in the cytoplasm. It catalyses the reaction sn-glycerol 1-phosphate + NAD(+) = dihydroxyacetone phosphate + NADH + H(+). It carries out the reaction sn-glycerol 1-phosphate + NADP(+) = dihydroxyacetone phosphate + NADPH + H(+). It participates in membrane lipid metabolism; glycerophospholipid metabolism. Catalyzes the NAD(P)H-dependent reduction of dihydroxyacetonephosphate (DHAP or glycerone phosphate) to glycerol 1-phosphate (G1P). The G1P thus generated is used as the glycerophosphate backbone of phospholipids in the cellular membranes of Archaea. The protein is Glycerol-1-phosphate dehydrogenase [NAD(P)+] of Pyrobaculum aerophilum (strain ATCC 51768 / DSM 7523 / JCM 9630 / CIP 104966 / NBRC 100827 / IM2).